The chain runs to 707 residues: MNQYLAVTSNGMENLLVEELTKLGIENAKPVQAGVKFKATNEQIYRCCLWSRLASRFVRVLSEFTCNDDMDLYLSTSSINWVNQFHSSKRFVVDFNGTNREIRNSQYGAMKVKDGIVDCFEKKGLPRPNISKERPDIRVHVRLHKDKAILGVDMVGSGLHQRGYRPESGRAPLRETLAAAIIMRCGWDGHQPLLDPMCGSGTLLIEAAMMAANMAPGVKRKQWCFESLEDFEPDTWAEIKSEANVQARRGVKKVDAKFFGFDNDPKVLKVAQENARRAGVEELIEFAQGDVATITRLSGFENGVIVSNPPYGERLGTEPGLIALYTAFGGQLKAEFGGCKASIFSSSDELLSCLRMRADKQFKLNNGALPCHQKNYSIAERSADEVKGADTNTQIAPDFSNRLKKNIGKIGKWARKEKLDCYRIYDADLPEYNVAIDVYGDQIVIQEYAAPKNIPEEKAKRRLTDIIRATIQVTGVEANKVVLKVREKQKGRSQYQKLGQVSETLEVNEYGVKLIVNLHDYLDTGLFLDHKITRRRLGEMAQGKDFLNLFAYTGSATVHAAVGGARSTTTVDMSNTYLNWAKDNMQLNGCIGRQHRFEQADCLQWLENAKGEYDLIFIDPPTFSNSKRMETSFDVQRDHIKLMTNLKRLLRAGGTIVFSNNKRHFKMDEEGLAELGLKAQNISSQTLPLDFSRNKHIHNCWLVTHAE.

In terms of domain architecture, THUMP spans 43–154 (QIYRCCLWSR…KDKAILGVDM (112 aa)).

This sequence belongs to the methyltransferase superfamily. RlmKL family.

The protein localises to the cytoplasm. It catalyses the reaction guanosine(2445) in 23S rRNA + S-adenosyl-L-methionine = N(2)-methylguanosine(2445) in 23S rRNA + S-adenosyl-L-homocysteine + H(+). The catalysed reaction is guanosine(2069) in 23S rRNA + S-adenosyl-L-methionine = N(2)-methylguanosine(2069) in 23S rRNA + S-adenosyl-L-homocysteine + H(+). Its function is as follows. Specifically methylates the guanine in position 2445 (m2G2445) and the guanine in position 2069 (m7G2069) of 23S rRNA. In Vibrio parahaemolyticus serotype O3:K6 (strain RIMD 2210633), this protein is Ribosomal RNA large subunit methyltransferase K/L.